Consider the following 513-residue polypeptide: ATP synthase subunit alpha (513 aa).

Residue 169–176 (GDRQTGKT) coordinates ATP.

It belongs to the ATPase alpha/beta chains family. As to quaternary structure, F-type ATPases have 2 components, CF(1) - the catalytic core - and CF(0) - the membrane proton channel. CF(1) has five subunits: alpha(3), beta(3), gamma(1), delta(1), epsilon(1). CF(0) has three main subunits: a(1), b(2) and c(9-12). The alpha and beta chains form an alternating ring which encloses part of the gamma chain. CF(1) is attached to CF(0) by a central stalk formed by the gamma and epsilon chains, while a peripheral stalk is formed by the delta and b chains.

It localises to the cell inner membrane. The enzyme catalyses ATP + H2O + 4 H(+)(in) = ADP + phosphate + 5 H(+)(out). In terms of biological role, produces ATP from ADP in the presence of a proton gradient across the membrane. The alpha chain is a regulatory subunit. The protein is ATP synthase subunit alpha of Ralstonia nicotianae (strain ATCC BAA-1114 / GMI1000) (Ralstonia solanacearum).